We begin with the raw amino-acid sequence, 316 residues long: Acetyl-coenzyme A carboxylase carboxyl transferase subunit alpha (316 aa).

One can recognise a CoA carboxyltransferase C-terminal domain in the interval 24-291 (NIKDKADIVD…KEALIQQLNE (268 aa)).

This sequence belongs to the AccA family. Acetyl-CoA carboxylase is a heterohexamer composed of biotin carboxyl carrier protein (AccB), biotin carboxylase (AccC) and two subunits each of ACCase subunit alpha (AccA) and ACCase subunit beta (AccD).

Its subcellular location is the cytoplasm. The enzyme catalyses N(6)-carboxybiotinyl-L-lysyl-[protein] + acetyl-CoA = N(6)-biotinyl-L-lysyl-[protein] + malonyl-CoA. It functions in the pathway lipid metabolism; malonyl-CoA biosynthesis; malonyl-CoA from acetyl-CoA: step 1/1. In terms of biological role, component of the acetyl coenzyme A carboxylase (ACC) complex. First, biotin carboxylase catalyzes the carboxylation of biotin on its carrier protein (BCCP) and then the CO(2) group is transferred by the carboxyltransferase to acetyl-CoA to form malonyl-CoA. In Ruthia magnifica subsp. Calyptogena magnifica, this protein is Acetyl-coenzyme A carboxylase carboxyl transferase subunit alpha.